A 92-amino-acid chain; its full sequence is MKFEAVVRTELGKGASRRLRLAGQFPAVVYGGEAAPVAVALNHDDIVNQMDKPEFYEAITLVIGGEEVKVKPQDVQRHAFKPKVEHMDFIRI.

Belongs to the bacterial ribosomal protein bL25 family. As to quaternary structure, part of the 50S ribosomal subunit; part of the 5S rRNA/L5/L18/L25 subcomplex. Contacts the 5S rRNA. Binds to the 5S rRNA independently of L5 and L18.

This is one of the proteins that binds to the 5S RNA in the ribosome where it forms part of the central protuberance. The protein is Large ribosomal subunit protein bL25 of Vibrio vulnificus (strain CMCP6).